The sequence spans 374 residues: GTPase Obg (374 aa).

In terms of domain architecture, Obg spans 1 to 159 (MKFIDEVRIH…RDLRLELRLL (159 aa)). Residues 160–333 (ADVGLLGLPN…LVYAIWQALP (174 aa)) form the OBG-type G domain. Residues 166–173 (GLPNAGKS), 191–195 (FTTLY), 213–216 (DIPG), 283–286 (NKSD), and 314–316 (SAA) contribute to the GTP site. Residues serine 173 and threonine 193 each contribute to the Mg(2+) site. The tract at residues 337–374 (PAADPTQTEDWGDESDAGERLENWEGDDLDADWEEEQV) is disordered. A compositionally biased stretch (acidic residues) spans 360–374 (WEGDDLDADWEEEQV).

This sequence belongs to the TRAFAC class OBG-HflX-like GTPase superfamily. OBG GTPase family. In terms of assembly, monomer. It depends on Mg(2+) as a cofactor.

The protein localises to the cytoplasm. Functionally, an essential GTPase which binds GTP, GDP and possibly (p)ppGpp with moderate affinity, with high nucleotide exchange rates and a fairly low GTP hydrolysis rate. Plays a role in control of the cell cycle, stress response, ribosome biogenesis and in those bacteria that undergo differentiation, in morphogenesis control. The chain is GTPase Obg from Acidithiobacillus ferrooxidans (strain ATCC 23270 / DSM 14882 / CIP 104768 / NCIMB 8455) (Ferrobacillus ferrooxidans (strain ATCC 23270)).